Reading from the N-terminus, the 256-residue chain is Pimeloyl-[acyl-carrier protein] methyl ester esterase (256 aa).

The region spanning 15 to 242 (HLVLLHGWGL…AAHAPFISHP (228 aa)) is the AB hydrolase-1 domain. Substrate is bound by residues Trp-22, 82–83 (SL), and 143–147 (FLALQ). The active-site Nucleophile is the Ser-82. Active-site residues include Asp-207 and His-235. A substrate-binding site is contributed by His-235.

This sequence belongs to the AB hydrolase superfamily. Carboxylesterase BioH family. In terms of assembly, monomer.

It is found in the cytoplasm. It catalyses the reaction 6-carboxyhexanoyl-[ACP] methyl ester + H2O = 6-carboxyhexanoyl-[ACP] + methanol + H(+). The protein operates within cofactor biosynthesis; biotin biosynthesis. The physiological role of BioH is to remove the methyl group introduced by BioC when the pimeloyl moiety is complete. It allows to synthesize pimeloyl-ACP via the fatty acid synthetic pathway through the hydrolysis of the ester bonds of pimeloyl-ACP esters. In Escherichia coli O6:K15:H31 (strain 536 / UPEC), this protein is Pimeloyl-[acyl-carrier protein] methyl ester esterase.